Consider the following 282-residue polypeptide: Parvulin-like PPIase (282 aa).

An N-terminal signal peptide occupies residues 1–20; it reads MKKLSVIFLSVSMLSSIAFG. Residues 138–231 form the PpiC domain; the sequence is KEQIKVAHIL…FGWHIIKVLE (94 aa).

Belongs to the PpiC/parvulin rotamase family.

The protein localises to the cell outer membrane. It carries out the reaction [protein]-peptidylproline (omega=180) = [protein]-peptidylproline (omega=0). The polypeptide is Parvulin-like PPIase (plp) (Rickettsia prowazekii (strain Madrid E)).